Here is a 24-residue protein sequence, read N- to C-terminus: Caerulein precursor fragment B4 (24 aa).

Expressed by the skin glands.

It is found in the secreted. Functionally, has antibacterial and antifungal activity. The protein is Caerulein precursor fragment B4 of Xenopus borealis (Kenyan clawed frog).